The following is a 207-amino-acid chain: dTTP/UTP pyrophosphatase (207 aa).

Catalysis depends on aspartate 68, which acts as the Proton acceptor.

The protein belongs to the Maf family. YhdE subfamily. A divalent metal cation is required as a cofactor.

The protein localises to the cytoplasm. The enzyme catalyses dTTP + H2O = dTMP + diphosphate + H(+). It catalyses the reaction UTP + H2O = UMP + diphosphate + H(+). Its function is as follows. Nucleoside triphosphate pyrophosphatase that hydrolyzes dTTP and UTP. May have a dual role in cell division arrest and in preventing the incorporation of modified nucleotides into cellular nucleic acids. In Staphylothermus marinus (strain ATCC 43588 / DSM 3639 / JCM 9404 / F1), this protein is dTTP/UTP pyrophosphatase.